Consider the following 580-residue polypeptide: Negative elongation factor B (580 aa).

An N6-acetyllysine modification is found at lysine 519. The tract at residues 552–580 is disordered; the sequence is DHRKPSPTQAAETPALDLPLPSVPAPATL. Position 557 is a phosphoserine (serine 557).

This sequence belongs to the NELF-B family. In terms of assembly, the NELF complex is composed of NELFA, NELFB, NELFCD and NELFE; the N-terminus of NELFB binds to the NELFA:NELFCD subcomplex. Binds RNA which may help to stabilize the NELF complex on nucleic acid Interacts with the first BRCT repeat of BRCA1. Interacts with KIAA1191. Isoform 1 and isoform 2 interact with NELFA, NELFCD and NELFE. As to expression, isoform 1 is expressed in the kidney, liver, adipose and lung. Isoform 2 is widely expressed.

It is found in the nucleus. Its function is as follows. Essential component of the NELF complex, a complex that negatively regulates the elongation of transcription by RNA polymerase II (Pol II). The NELF complex, which acts via an association with the DSIF complex and causes transcriptional pausing, is counteracted by the P-TEFb kinase complex. May be able to induce chromatin unfolding. Essential for early embryogenesis; plays an important role in maintaining the undifferentiated state of embryonic stem cells (ESCs) by preventing unscheduled expression of developmental genes. Plays a key role in establishing the responsiveness of stem cells to developmental cues; facilitates plasticity and cell fate commitment in ESCs by establishing the appropriate expression level of signaling molecules. Supports the transcription of genes involved in energy metabolism in cardiomyocytes; facilitates the association of transcription initiation factors with the promoters of the metabolism-related genes. The sequence is that of Negative elongation factor B (Nelfb) from Mus musculus (Mouse).